The primary structure comprises 151 residues: 3-hydroxyacyl-[acyl-carrier-protein] dehydratase FabZ (151 aa).

The active site involves H54.

The protein belongs to the thioester dehydratase family. FabZ subfamily.

The protein resides in the cytoplasm. It carries out the reaction a (3R)-hydroxyacyl-[ACP] = a (2E)-enoyl-[ACP] + H2O. Its function is as follows. Involved in unsaturated fatty acids biosynthesis. Catalyzes the dehydration of short chain beta-hydroxyacyl-ACPs and long chain saturated and unsaturated beta-hydroxyacyl-ACPs. This chain is 3-hydroxyacyl-[acyl-carrier-protein] dehydratase FabZ, found in Blochmanniella floridana.